A 761-amino-acid chain; its full sequence is Protein PHTF1 (761 aa).

Residues 6–150 form the PHTF domain; sequence RDAISWYQKK…VHCQIVSTQI (145 aa). Transmembrane regions (helical) follow at residues 77–97, 99–119, and 121–141; these read GLVRVVFFPLFSSWWIQVTSL, IFVWLLLLYLMQVTAVVLYLL, and PIVSASEVLGPLCLMLLMGTV. A disordered region spans residues 152–184; it reads RPSGNNGNRRRRKLRKTVNGDGSRDNGNNSPDK. Residues 170–181 show a composition bias toward low complexity; the sequence is NGDGSRDNGNNS. N-linked (GlcNAc...) asparagine glycosylation is found at asparagine 179 and asparagine 224. Phosphoserine occurs at positions 272, 276, 277, 333, and 335. Residues 345–414 form a disordered region; it reads VFSQGSRSGM…NTIHSGTKRD (70 aa). Residues 347-363 show a composition bias toward low complexity; that stretch reads SQGSRSGMSGGSRSLNL. Asparagine 362 carries N-linked (GlcNAc...) asparagine glycosylation. A compositionally biased stretch (basic and acidic residues) spans 364 to 375; it reads SRRDSESTRHDS. A glycan (N-linked (GlcNAc...) asparagine) is linked at asparagine 430. The next 4 helical transmembrane spans lie at 472–492, 514–534, 610–630, and 644–664; these read GVGYQMLGNAVTVGLALFPFL, TLFCGAPPVTPVVILSIINFI, VVVSSVFLLTLSIAFICCAQV, and WEFLIWETALLLFLLRLASLG. Residues asparagine 673 and asparagine 732 are each glycosylated (N-linked (GlcNAc...) asparagine). The helical transmembrane segment at 736-756 threads the bilayer; the sequence is VVILSAVSGVISDLLGFNIRL.

In terms of assembly, interacts with FEM1B. As to expression, widely expressed with highest levels in testis.

It is found in the endoplasmic reticulum membrane. The protein resides in the golgi apparatus. Its subcellular location is the cis-Golgi network membrane. This chain is Protein PHTF1, found in Mus musculus (Mouse).